We begin with the raw amino-acid sequence, 258 residues long: Imidazole glycerol phosphate synthase subunit HisF (258 aa).

Catalysis depends on residues aspartate 11 and aspartate 130.

This sequence belongs to the HisA/HisF family. Heterodimer of HisH and HisF.

The protein resides in the cytoplasm. It carries out the reaction 5-[(5-phospho-1-deoxy-D-ribulos-1-ylimino)methylamino]-1-(5-phospho-beta-D-ribosyl)imidazole-4-carboxamide + L-glutamine = D-erythro-1-(imidazol-4-yl)glycerol 3-phosphate + 5-amino-1-(5-phospho-beta-D-ribosyl)imidazole-4-carboxamide + L-glutamate + H(+). The protein operates within amino-acid biosynthesis; L-histidine biosynthesis; L-histidine from 5-phospho-alpha-D-ribose 1-diphosphate: step 5/9. Functionally, IGPS catalyzes the conversion of PRFAR and glutamine to IGP, AICAR and glutamate. The HisF subunit catalyzes the cyclization activity that produces IGP and AICAR from PRFAR using the ammonia provided by the HisH subunit. This Escherichia coli (strain ATCC 8739 / DSM 1576 / NBRC 3972 / NCIMB 8545 / WDCM 00012 / Crooks) protein is Imidazole glycerol phosphate synthase subunit HisF.